Reading from the N-terminus, the 411-residue chain is Corticotropin-releasing factor receptor 2 (411 aa).

The segment at residues 1-19 (MDAALLLSLLEANCSLALA) is a signal peptide (not cleaved). The Extracellular segment spans residues 1 to 108 (MDAALLLSLL…EPILDDKQRK (108 aa)). N-linked (GlcNAc...) asparagine glycans are attached at residues N13, N41, N74, N86, and N94. 3 disulfides stabilise this stretch: C14/C50, C40/C83, and C64/C98. Residues 109 to 139 (YDLHYRIALIVNYLGHCVSVVALVAAFLLFL) form a helical membrane-spanning segment. Residues 140-146 (VLRSIRC) lie on the Cytoplasmic side of the membrane. A helical membrane pass occupies residues 147–171 (LRNVIHWNLITTFILRNIAWFLLQL). Over 172–185 (IDHEVHEGNEVWCR) the chain is Extracellular. A disulfide bond links C184 and C254. The chain crosses the membrane as a helical span at residues 186–214 (CITTIFNYFVVTNFFWMFVEGCYLHTAIV). Residues 215 to 221 (MTYSTEH) lie on the Cytoplasmic side of the membrane. The helical transmembrane segment at 222 to 249 (LRKWLFLFIGWCIPCPIIIAWAVGKLYY) threads the bilayer. Topologically, residues 250-265 (ENEQCWFGKEAGDLVD) are extracellular. The chain crosses the membrane as a helical span at residues 266–291 (YIYQGPVMLVLLINFVFLFNIVRILM). At 292 to 302 (TKLRASTTSET) the chain is on the cytoplasmic side. Residues 303 to 327 (IQYRKAVKATLVLLPLLGITYMLFF) form a helical membrane-spanning segment. Over 328–334 (VNPGEDD) the chain is Extracellular. A helical transmembrane segment spans residues 335–364 (LSQIVFIYFNSFLQSFQGFFVSVFYCFFNG). Residues 365–411 (EVRAALRKRWHRWQDHHALRVPVARAMSIPTSPTRISFHSIKQTAAV) lie on the Cytoplasmic side of the membrane.

This sequence belongs to the G-protein coupled receptor 2 family. As to quaternary structure, monomer. Interacts with CRF, UCN, UCN2 and UCN3. In terms of processing, a N-glycosylation site within the signal peptide impedes its proper cleavage and function. As to expression, highly expressed in the heart. Also expressed in lungs, skeletal muscle, gastrointestinal tract, epididymis, and brain.

The protein resides in the cell membrane. Its function is as follows. G-protein coupled receptor for CRH (corticotropin-releasing factor), UCN (urocortin), UCN2 and UCN3. Has high affinity for UCN. Ligand binding causes a conformation change that triggers signaling via guanine nucleotide-binding proteins (G proteins) and down-stream effectors, such as adenylate cyclase. Promotes the activation of adenylate cyclase, leading to increased intracellular cAMP levels. The sequence is that of Corticotropin-releasing factor receptor 2 (Crhr2) from Mus musculus (Mouse).